Consider the following 121-residue polypeptide: Large ribosomal subunit protein uL14 (121 aa).

The protein belongs to the universal ribosomal protein uL14 family. As to quaternary structure, part of the 50S ribosomal subunit. Forms a cluster with proteins L3 and L19. In the 70S ribosome, L14 and L19 interact and together make contacts with the 16S rRNA in bridges B5 and B8.

Binds to 23S rRNA. Forms part of two intersubunit bridges in the 70S ribosome. In Prochlorococcus marinus (strain MIT 9301), this protein is Large ribosomal subunit protein uL14.